We begin with the raw amino-acid sequence, 1032 residues long: Chitin synthase 8 (1032 aa).

2 stretches are compositionally biased toward pro residues: residues 1–11 (MRPGDIYPPPQ) and 26–41 (PPQPQPYPPQPYPPQQ). The disordered stretch occupies residues 1 to 220 (MRPGDIYPPP…DDDMNDSHPL (220 aa)). Polar residues-rich tracts occupy residues 65 to 78 (MSPTPQEPQGSRYN), 98 to 107 (LPTQSLSPFN), and 143 to 160 (TNPSHLPPQQQLTPSYSY). The N-linked (GlcNAc...) asparagine glycan is linked to Asn78. Residues 176–188 (PHHSSQSSVSSIP) show a composition bias toward low complexity. N-linked (GlcNAc...) asparagine glycans are attached at residues Asn215, Asn304, Asn473, Asn545, and Asn691. 7 helical membrane passes run 728–748 (TLNMVFAWFALGNYYIAFFVL), 762–782 (VNIPLHYIYIALLLWCFLLSL), 796–816 (SMVGFALITIYMLFAAIFLAV), 842–862 (IVISLLATYGLYIISSLMALE), 870–890 (FFQYLLIAPSYINVLNVYAFC), 972–992 (VLLVWTMTNGALVAVILQASG), and 995–1015 (NSLATTYMGVLLYTVAGLAFF).

It belongs to the chitin synthase family.

The protein localises to the cell membrane. The enzyme catalyses [(1-&gt;4)-N-acetyl-beta-D-glucosaminyl](n) + UDP-N-acetyl-alpha-D-glucosamine = [(1-&gt;4)-N-acetyl-beta-D-glucosaminyl](n+1) + UDP + H(+). Its function is as follows. Polymerizes chitin, a structural polymer of the cell wall and septum, by transferring the sugar moiety of UDP-GlcNAc to the non-reducing end of the growing chitin polymer. The polypeptide is Chitin synthase 8 (Cryptococcus neoformans var. grubii serotype A (strain H99 / ATCC 208821 / CBS 10515 / FGSC 9487) (Filobasidiella neoformans var. grubii)).